Reading from the N-terminus, the 298-residue chain is Tyrosine recombinase XerC (298 aa).

In terms of domain architecture, Core-binding (CB) spans 1–84; sequence MNHIQEAFLN…TLRTLYEYWM (84 aa). Residues 105–286 enclose the Tyr recombinase domain; that stretch reads YLPQFSLEEE…SNQQLRKVYL (182 aa). Catalysis depends on residues Arg-145, Lys-169, His-238, Arg-241, and His-264. The active-site O-(3'-phospho-DNA)-tyrosine intermediate is Tyr-273.

Belongs to the 'phage' integrase family. XerC subfamily. In terms of assembly, forms a cyclic heterotetrameric complex composed of two molecules of XerC and two molecules of XerD.

Its subcellular location is the cytoplasm. Site-specific tyrosine recombinase, which acts by catalyzing the cutting and rejoining of the recombining DNA molecules. The XerC-XerD complex is essential to convert dimers of the bacterial chromosome into monomers to permit their segregation at cell division. It also contributes to the segregational stability of plasmids. The protein is Tyrosine recombinase XerC of Staphylococcus aureus.